An 840-amino-acid chain; its full sequence is Heat shock 70 kDa protein 4 (840 aa).

Position 53 is an N6-acetyllysine (Lys-53). The residue at position 76 (Ser-76) is a Phosphoserine. Phosphotyrosine is present on residues Tyr-89 and Tyr-336. Ser-393 and Ser-415 each carry phosphoserine. The residue at position 430 (Lys-430) is an N6-acetyllysine. The disordered stretch occupies residues 500 to 575 (VHKSEESEEP…QAKKAKVKTS (76 aa)). A compositionally biased stretch (basic and acidic residues) spans 514–533 (QNAKEEEKMQVDQEEPHTEE). Phosphothreonine is present on Thr-538. A Phosphoserine modification is found at Ser-546. Tyr-660 is modified (phosphotyrosine). Ser-756 carries the phosphoserine modification. Lys-773 is modified (N6-methyllysine). Positions 781–840 (PIISKPKPKVEPPKEEPKHAEQNGPVDGQGDNPGTQAAEHGADTAVPSDGDKKLPEMDID) are disordered. Basic and acidic residues-rich tracts occupy residues 788 to 801 (PKVE…KHAE) and 829 to 840 (DGDKKLPEMDID).

It belongs to the heat shock protein 70 family. In terms of assembly, interacts with TJP1/ZO-1. In terms of tissue distribution, ubiquitous. Highly expressed in testis.

The protein localises to the cytoplasm. This Rattus norvegicus (Rat) protein is Heat shock 70 kDa protein 4 (Hspa4).